The primary structure comprises 144 residues: Superoxide dismutase [Mn] 1 (144 aa).

The Mn(2+) site is built by histidine 42, aspartate 124, and histidine 128.

The protein belongs to the iron/manganese superoxide dismutase family. Mn(2+) is required as a cofactor.

The catalysed reaction is 2 superoxide + 2 H(+) = H2O2 + O2. Its function is as follows. Destroys superoxide anion radicals which are normally produced within the cells and which are toxic to biological systems. This is Superoxide dismutase [Mn] 1 (sod1) from Haloferax mediterranei (Halobacterium mediterranei).